A 253-amino-acid polypeptide reads, in one-letter code: Ditrans,polycis-undecaprenyl-diphosphate synthase ((2E,6E)-farnesyl-diphosphate specific) (253 aa).

The active site involves aspartate 25. Residue aspartate 25 coordinates Mg(2+). Substrate contacts are provided by residues 26–29 (GNGR), tryptophan 30, arginine 38, histidine 42, and 70–72 (SSE). Catalysis depends on asparagine 73, which acts as the Proton acceptor. Residues tryptophan 74, arginine 76, and arginine 193 each contribute to the substrate site. Position 198 (histidine 198) interacts with Mg(2+). 199 to 201 (RIS) is a substrate binding site. Glutamate 212 is a Mg(2+) binding site.

This sequence belongs to the UPP synthase family. As to quaternary structure, homodimer. The cofactor is Mg(2+).

It catalyses the reaction 8 isopentenyl diphosphate + (2E,6E)-farnesyl diphosphate = di-trans,octa-cis-undecaprenyl diphosphate + 8 diphosphate. Its function is as follows. Catalyzes the sequential condensation of isopentenyl diphosphate (IPP) with (2E,6E)-farnesyl diphosphate (E,E-FPP) to yield (2Z,6Z,10Z,14Z,18Z,22Z,26Z,30Z,34E,38E)-undecaprenyl diphosphate (di-trans,octa-cis-UPP). UPP is the precursor of glycosyl carrier lipid in the biosynthesis of bacterial cell wall polysaccharide components such as peptidoglycan and lipopolysaccharide. The protein is Ditrans,polycis-undecaprenyl-diphosphate synthase ((2E,6E)-farnesyl-diphosphate specific) of Pectobacterium atrosepticum (strain SCRI 1043 / ATCC BAA-672) (Erwinia carotovora subsp. atroseptica).